The sequence spans 260 residues: Carbonic anhydrase 2 (260 aa).

The residue at position 2 (Ser-2) is an N-acetylserine. Position 2 is a phosphoserine (Ser-2). An Alpha-carbonic anhydrase domain is found at 3-259; sequence HHWGYSKSNG…LKNRKIKASF (257 aa). Residues 16 to 39 are disordered; sequence WHKEFPIANGDRQSPVDIDTGTAQ. The Proton donor/acceptor role is filled by His-64. Ser-87 carries the post-translational modification Phosphoserine. The Zn(2+) site is built by His-94, His-96, and His-119. Phosphoserine is present on Ser-165. Substrate is bound at residue 198-199; it reads TT. A Phosphoserine modification is found at Ser-232.

It belongs to the alpha-carbonic anhydrase family. Interacts with SLC4A4 and SLC26A6. Interaction with SLC4A7 regulates SLC4A7 transporter activity. The cofactor is Zn(2+).

It localises to the cytoplasm. Its subcellular location is the cell membrane. It carries out the reaction hydrogencarbonate + H(+) = CO2 + H2O. It catalyses the reaction urea = cyanamide + H2O. With respect to regulation, inhibited by acetazolamide. In terms of biological role, catalyzes the reversible hydration of carbon dioxide. Can also hydrate cyanamide to urea. Involved in the regulation of fluid secretion into the anterior chamber of the eye. Essential for bone resorption and osteoclast differentiation. Contributes to intracellular pH regulation in the duodenal upper villous epithelium during proton-coupled peptide absorption. Stimulates the chloride-bicarbonate exchange activity of SLC26A6. The polypeptide is Carbonic anhydrase 2 (Ca2) (Rattus norvegicus (Rat)).